The sequence spans 328 residues: 6-phosphogluconolactonase (328 aa).

This sequence belongs to the cycloisomerase 2 family.

It carries out the reaction 6-phospho-D-glucono-1,5-lactone + H2O = 6-phospho-D-gluconate + H(+). Its pathway is carbohydrate degradation; pentose phosphate pathway; D-ribulose 5-phosphate from D-glucose 6-phosphate (oxidative stage): step 2/3. In terms of biological role, catalyzes the hydrolysis of 6-phosphogluconolactone to 6-phosphogluconate. The chain is 6-phosphogluconolactonase from Photorhabdus laumondii subsp. laumondii (strain DSM 15139 / CIP 105565 / TT01) (Photorhabdus luminescens subsp. laumondii).